A 651-amino-acid chain; its full sequence is MBT domain-containing protein 1 (651 aa).

The segment at 21–55 (SFGMFDGYDSCSEDTSSSSSSDESEEEVAPLPSSL) is disordered. Over residues 29–41 (DSCSEDTSSSSSS) the composition is skewed to low complexity. The FCS-type zinc finger occupies 68–103 (PDGKSGMATCEMCGMVGVRDAFYSKTKRFCSVSCSR). Residues C77, C80, C97, and C101 each coordinate Zn(2+). 4 MBT repeats span residues 164–268 (FSWG…LVPP), 276–373 (TNWK…IGHR), 374–479 (FKRT…LTPP), and 487–583 (FKWF…LQPP). 2 disordered regions span residues 581–610 (QPPA…YKGH) and 629–651 (TFLQ…KQEP). Low complexity predominate over residues 586–596 (QSNKDSQSNIS). Basic residues predominate over residues 597–610 (KQKKKSKSQPYKGH). A compositionally biased stretch (polar residues) spans 632 to 643 (QGASDQESNGSG).

As to quaternary structure, monomer. Component of the NuA4 histone acetyltransferase complex.

It localises to the nucleus. It is found in the chromosome. In terms of biological role, chromatin reader component of the NuA4 histone acetyltransferase complex, a multiprotein complex involved in transcriptional activation of select genes principally by acetylation of nucleosomal histones H4 and H2A. The NuA4 complex plays a direct role in repair of DNA double-strand breaks (DSBs) by promoting homologous recombination (HR). MBTD1 specifically recognizes and binds monomethylated and dimethylated 'Lys-20' on histone H4 (H4K20me1 and H4K20me2, respectively). In the NuA4 complex, MBTD1 promotes recruitment of the complex to H4K20me marks by competing with TP53BP1 for binding to H4K20me. Following recruitment to H4K20me at DNA breaks, the NuA4 complex catalyzes acetylation of 'Lys-15' on histone H2A (H2AK15), blocking the ubiquitination mark required for TP53BP1 localization at DNA breaks, thereby promoting homologous recombination (HR). The polypeptide is MBT domain-containing protein 1 (Xenopus tropicalis (Western clawed frog)).